The primary structure comprises 335 residues: 2-acylglycerol O-acyltransferase 2-A (335 aa).

2 helical membrane passes run 24-44 and 47-67; these read WVFSFLALAQTCILLFFVLLF and FWIISVVYGVWWFLDWDTPSK.

This sequence belongs to the diacylglycerol acyltransferase family.

It localises to the endoplasmic reticulum membrane. Its subcellular location is the cytoplasm. The protein localises to the perinuclear region. The catalysed reaction is a 2-acylglycerol + an acyl-CoA = a 1,2-diacylglycerol + CoA. It carries out the reaction a 2-acylglycerol + an acyl-CoA = a 1,2-diacyl-sn-glycerol + CoA. The enzyme catalyses a 2-acylglycerol + an acyl-CoA = a 2,3-diacyl-sn-glycerol + CoA. It catalyses the reaction a 1-acylglycerol + an acyl-CoA = a 1,2-diacylglycerol + CoA. The catalysed reaction is a 1-acylglycerol + an acyl-CoA = a 1,3-diacylglycerol + CoA. It carries out the reaction 1-O-alkylglycerol + an acyl-CoA = 1-O-alkyl-3-acylglycerol + CoA. The enzyme catalyses an acyl-CoA + a 1,2-diacyl-sn-glycerol = a triacyl-sn-glycerol + CoA. Its pathway is glycerolipid metabolism; triacylglycerol biosynthesis. Its function is as follows. Catalyzes the formation of diacylglycerol from 2-monoacylglycerol and fatty acyl-CoA. Involved in glycerolipid synthesis and lipid metabolism. Catalyzes the formation of diacylglycerol, the precursor of triacylglycerol, by transferring the acyl chain of a fatty acyl-CoA to a monoacylglycerol. Plays a central role in absorption of dietary fat in the small intestine by catalyzing the resynthesis of triacylglycerol in enterocytes. Has a preference toward monoacylglycerols containing unsaturated fatty acids in an order of C18:3 &gt; C18:2 &gt; C18:1 &gt; C18:0 at sn-2. Able to use 1-monoalkylglycerol (1-MAkG, 1-O-alkylglycerol) as an acyl acceptor for the synthesis of monoalkyl-monoacylglycerol (MAMAG, 1-O-alkyl-3-acylglycerol or 1-O-alkyl-2-acylglycerol) and subsequently, with lower efficiency, may add another acyl chain producing monoalkyl-diacylglycerol (MADAG, 1-O-alkyl-2,3-diacylglycerol). Possesses weak but significant activity with diacylglycerol as substrate, producing triacylglycerol (triacyl-sn-glycerol). The sequence is that of 2-acylglycerol O-acyltransferase 2-A (mogat2-a) from Xenopus laevis (African clawed frog).